The chain runs to 649 residues: Alpha-amylase (649 aa).

Catalysis depends on Glu124, which acts as the Nucleophile. Asp215 (proton donor) is an active-site residue.

Belongs to the glycosyl hydrolase 57 family. Homodimer.

The enzyme catalyses Endohydrolysis of (1-&gt;4)-alpha-D-glucosidic linkages in polysaccharides containing three or more (1-&gt;4)-alpha-linked D-glucose units.. Functionally, displays a broad range of substrate specificity, with the capacity to hydrolyze carbohydrates as simple as maltotriose. The sequence is that of Alpha-amylase (amyA) from Pyrococcus furiosus (strain ATCC 43587 / DSM 3638 / JCM 8422 / Vc1).